Consider the following 347-residue polypeptide: Mitochondrial glycine transporter (347 aa).

Solcar repeat units lie at residues 18–102, 138–222, and 247–331; these read SKPT…LRTA, LSHT…SKRS, and STAS…LIMW. Transmembrane regions (helical) follow at residues 24–49, 77–103, 144–169, 197–220, 251–277, and 306–324; these read FAAG…TRVQ, GTLP…RTAV, LITG…VRYE, GFGA…EQSK, INFI…KTRV, and GLGL…AWTV.

Belongs to the mitochondrial carrier (TC 2.A.29) family. SLC25A38 subfamily.

It localises to the mitochondrion inner membrane. It carries out the reaction glycine(in) = glycine(out). Mitochondrial glycine transporter that imports glycine into the mitochondrial matrix. Plays an important role in providing glycine for the first enzymatic step in heme biosynthesis, the condensation of glycine with succinyl-CoA to produce 5-aminolevulinate (ALA) in the mitochondrial matrix. This Coccidioides immitis (strain RS) (Valley fever fungus) protein is Mitochondrial glycine transporter.